The chain runs to 339 residues: Terpene synthase 7 (339 aa).

Residues D79 to S84 carry the DDxx(x)D/E motif motif. Positions N219–E227 match the NDxxSxxxD/E motif motif.

It belongs to the terpene synthase family.

The catalysed reaction is (2E,6E)-farnesyl diphosphate = (-)-beta-barbatene + diphosphate. Terpene synthase that converts its substrate farnesyl diphosphate (FPP) into the sesquiterpene beta-barbatene. The sequence is that of Terpene synthase 7 from Dictyostelium discoideum (Social amoeba).